A 71-amino-acid polypeptide reads, in one-letter code: ATP synthase subunit c (71 aa).

Transmembrane regions (helical) follow at residues Val-5–Ala-25 and Phe-46–Phe-66.

This sequence belongs to the ATPase C chain family. F-type ATPases have 2 components, F(1) - the catalytic core - and F(0) - the membrane proton channel. F(1) has five subunits: alpha(3), beta(3), gamma(1), delta(1), epsilon(1). F(0) has three main subunits: a(1), b(2) and c(10-14). The alpha and beta chains form an alternating ring which encloses part of the gamma chain. F(1) is attached to F(0) by a central stalk formed by the gamma and epsilon chains, while a peripheral stalk is formed by the delta and b chains.

It localises to the cell membrane. F(1)F(0) ATP synthase produces ATP from ADP in the presence of a proton or sodium gradient. F-type ATPases consist of two structural domains, F(1) containing the extramembraneous catalytic core and F(0) containing the membrane proton channel, linked together by a central stalk and a peripheral stalk. During catalysis, ATP synthesis in the catalytic domain of F(1) is coupled via a rotary mechanism of the central stalk subunits to proton translocation. In terms of biological role, key component of the F(0) channel; it plays a direct role in translocation across the membrane. A homomeric c-ring of between 10-14 subunits forms the central stalk rotor element with the F(1) delta and epsilon subunits. The sequence is that of ATP synthase subunit c from Clostridium beijerinckii (strain ATCC 51743 / NCIMB 8052) (Clostridium acetobutylicum).